The following is a 763-amino-acid chain: Phosphoglycerol transferase I (763 aa).

4 helical membrane passes run 1–21 (MSEL…AWKA), 26–46 (WWFA…ITLY), 77–97 (ILPG…LGWV), and 108–128 (FGYS…SPAF).

Belongs to the OpgB family.

It localises to the cell inner membrane. It carries out the reaction a phosphatidylglycerol + a membrane-derived-oligosaccharide D-glucose = a 1,2-diacyl-sn-glycerol + a membrane-derived-oligosaccharide 6-(glycerophospho)-D-glucose.. Its pathway is glycan metabolism; osmoregulated periplasmic glucan (OPG) biosynthesis. In terms of biological role, transfers a phosphoglycerol residue from phosphatidylglycerol to the membrane-bound nascent glucan backbones. The chain is Phosphoglycerol transferase I from Citrobacter koseri (strain ATCC BAA-895 / CDC 4225-83 / SGSC4696).